The sequence spans 396 residues: Gap junction gamma-1 protein (396 aa).

Over 1–22 (MSWSFLTRLLEEIHNHSTFVGK) the chain is Cytoplasmic. Residues 23-45 (IWLTVLIVFRIVLTAVGGESIYY) form a helical membrane-spanning segment. Topologically, residues 46 to 75 (DEQSKFVCNTEQPGCENVCYDAFAPLSHVR) are extracellular. The helical transmembrane segment at 76–95 (FWVFQIILVATPSVMYLGYA) threads the bilayer. Residues 96–175 (IHKIAKMEHG…RRIREDGLMK (80 aa)) lie on the Cytoplasmic side of the membrane. The tract at residues 146-165 (LESEKENKDQNQSKPKHDGR) is disordered. Residues 147-156 (ESEKENKDQN) show a composition bias toward basic and acidic residues. Residues 176-198 (IYVLQLLARTVFEVGFLVGQYFL) traverse the membrane as a helical segment. The Extracellular portion of the chain corresponds to 199–228 (YGFQVHPFYVCSRLPCPHKIDCFISRPTEK). A helical transmembrane segment spans residues 229 to 248 (TIFLLIMYGVTGLCLLLNIW). Topologically, residues 249–396 (EMLHLGFGTI…SGDGKTSVWI (148 aa)) are cytoplasmic. Positions 356 to 396 (YNHQNNPHGSREKKAKVGSKAGSNKSSASSKSGDGKTSVWI) are disordered. Positions 373–396 (GSKAGSNKSSASSKSGDGKTSVWI) are enriched in low complexity.

The protein belongs to the connexin family. Gamma-type subfamily. A connexon is composed of a hexamer of connexins. Interacts with CNST.

The protein localises to the cell membrane. The protein resides in the cell junction. It localises to the gap junction. Functionally, one gap junction consists of a cluster of closely packed pairs of transmembrane channels, the connexons, through which materials of low MW diffuse from one cell to a neighboring cell. This is Gap junction gamma-1 protein (GJC1) from Bos taurus (Bovine).